The chain runs to 430 residues: Serine--tRNA ligase (430 aa).

231–233 (TSE) serves as a coordination point for L-serine. 262 to 264 (RSE) lines the ATP pocket. Glu285 serves as a coordination point for L-serine. 349–352 (EISS) contacts ATP. Ser385 contributes to the L-serine binding site.

Belongs to the class-II aminoacyl-tRNA synthetase family. Type-1 seryl-tRNA synthetase subfamily. Homodimer. The tRNA molecule binds across the dimer.

The protein resides in the cytoplasm. The catalysed reaction is tRNA(Ser) + L-serine + ATP = L-seryl-tRNA(Ser) + AMP + diphosphate + H(+). It carries out the reaction tRNA(Sec) + L-serine + ATP = L-seryl-tRNA(Sec) + AMP + diphosphate + H(+). Its pathway is aminoacyl-tRNA biosynthesis; selenocysteinyl-tRNA(Sec) biosynthesis; L-seryl-tRNA(Sec) from L-serine and tRNA(Sec): step 1/1. Its function is as follows. Catalyzes the attachment of serine to tRNA(Ser). Is also able to aminoacylate tRNA(Sec) with serine, to form the misacylated tRNA L-seryl-tRNA(Sec), which will be further converted into selenocysteinyl-tRNA(Sec). This Jannaschia sp. (strain CCS1) protein is Serine--tRNA ligase.